The chain runs to 112 residues: Protein lin-52 homolog (112 aa).

Belongs to the lin-52 family. Component of the DREAM complex. Expressed in the brain, liver and retina. Highly expressed in the retinal ganglion cell and inner nuclear layers at the parr stage. Expressed at a lower level in inner segments of some retinal photoreceptors.

May be involved in retinal development. This Oncorhynchus mykiss (Rainbow trout) protein is Protein lin-52 homolog (lin52).